Consider the following 319-residue polypeptide: 12-(S)-hydroxy-5,8,10,14-eicosatetraenoic acid receptor (319 aa).

At 1–16 (MPFPNCSAPSTVVATA) the chain is on the extracellular side. A glycan (N-linked (GlcNAc...) asparagine) is linked at asparagine 5. A helical transmembrane segment spans residues 17 to 37 (VGVLLGLECGLGLLGNAVALW). Residues 38 to 52 (TFLFRVRVWKPYAVY) lie on the Cytoplasmic side of the membrane. Residues 53–73 (LLNLALADLLLAACLPFLAAF) traverse the membrane as a helical segment. The Extracellular portion of the chain corresponds to 74–91 (YLSLQAWHLGRVGCWALH). Residues 92–110 (FLLDLSRSVGMAFLAAVAL) traverse the membrane as a helical segment. Topologically, residues 111 to 131 (DRYLRVVHPRLKVNLLSPQAA) are cytoplasmic. A helical transmembrane segment spans residues 132-152 (LGVSGLVWLLMVALTCPGLLI). The Extracellular portion of the chain corresponds to 153 to 180 (SEAAQNSTRCHSFYSRADGSFSIIWQEA). A helical transmembrane segment spans residues 181–201 (LSCLQFVLPFGLIVFCNAGII). Residues 202-219 (RALQKRLREPEKQPKLQR) lie on the Cytoplasmic side of the membrane. Residues 220-240 (AQALVTLVVVLFALCFLPCFL) form a helical membrane-spanning segment. Topologically, residues 241–265 (ARVLMHIFQNLGSCRALCAVAHTSD) are extracellular. The helical transmembrane segment at 266–284 (VTGSLTYLHSVLNPVVYCF) threads the bilayer. Residues 285–319 (SSPTFRSSYRRVFHTLRGKGQAAEPPDFNPRDSYS) lie on the Cytoplasmic side of the membrane.

The protein belongs to the G-protein coupled receptor 1 family. In terms of assembly, interacts with KRAS; in a farnesylation-dependent manner.

The protein resides in the cell membrane. Functionally, high-affinity receptor for 12-(S)-hydroxy-5,8,10,14-eicosatetraenoic acid (12-S-HETE), with much lower affinities for other HETE isomers. 12-S-HETE is a eicosanoid, a 12-lipoxygenase (ALOX12) metabolite of arachidonic acid, involved in many physiologic and pathologic processes. 12-S-HETE-binding leads to activation of ERK1/2 (MAPK3/MAPK1), MEK, and NF-kappa-B pathways leading to cell growth. Plays a crucial role for proliferation, survival and macropinocytosis of KRAS-dependent cancer cells by mediating the translocation of KRAS from the endoplasmic reticulum to the plasma membrane (PM) and its association with the PM. Contributes to enhanced immune responses by inducing dendrite protrusion of small intestinal CX3CR1(+) phagocytes for the uptake of luminal antigens. Acts also as a key receptor for 12-(S)-HETE-mediated liver ischemia reperfusion injury. Its function is as follows. Proton-sensing G protein-coupled receptor. In Homo sapiens (Human), this protein is 12-(S)-hydroxy-5,8,10,14-eicosatetraenoic acid receptor (GPR31).